The following is a 449-amino-acid chain: Methylenetetrahydrofolate--tRNA-(uracil-5-)-methyltransferase TrmFO (449 aa).

Position 9–14 (9–14 (GGGMAG)) interacts with FAD.

Belongs to the MnmG family. TrmFO subfamily. FAD serves as cofactor.

Its subcellular location is the cytoplasm. The catalysed reaction is uridine(54) in tRNA + (6R)-5,10-methylene-5,6,7,8-tetrahydrofolate + NADH + H(+) = 5-methyluridine(54) in tRNA + (6S)-5,6,7,8-tetrahydrofolate + NAD(+). It carries out the reaction uridine(54) in tRNA + (6R)-5,10-methylene-5,6,7,8-tetrahydrofolate + NADPH + H(+) = 5-methyluridine(54) in tRNA + (6S)-5,6,7,8-tetrahydrofolate + NADP(+). Its function is as follows. Catalyzes the folate-dependent formation of 5-methyl-uridine at position 54 (M-5-U54) in all tRNAs. This chain is Methylenetetrahydrofolate--tRNA-(uracil-5-)-methyltransferase TrmFO, found in Ruegeria pomeroyi (strain ATCC 700808 / DSM 15171 / DSS-3) (Silicibacter pomeroyi).